We begin with the raw amino-acid sequence, 253 residues long: tRNA uridine(34) hydroxylase (253 aa).

The Rhodanese domain maps to 127–221 (RGRPLVLLDT…YFEEVGGEGY (95 aa)). Cys181 serves as the catalytic Cysteine persulfide intermediate.

Belongs to the TrhO family.

It catalyses the reaction uridine(34) in tRNA + AH2 + O2 = 5-hydroxyuridine(34) in tRNA + A + H2O. Its function is as follows. Catalyzes oxygen-dependent 5-hydroxyuridine (ho5U) modification at position 34 in tRNAs. In Xanthomonas oryzae pv. oryzae (strain MAFF 311018), this protein is tRNA uridine(34) hydroxylase.